Consider the following 365-residue polypeptide: Chorismate synthase (365 aa).

Residues Arg-48 and Arg-54 each coordinate NADP(+). FMN-binding positions include 125 to 127, 238 to 239, Ala-278, 293 to 297, and Arg-319; these read RSS, NA, and KPTSS.

This sequence belongs to the chorismate synthase family. Homotetramer. FMNH2 is required as a cofactor.

It catalyses the reaction 5-O-(1-carboxyvinyl)-3-phosphoshikimate = chorismate + phosphate. The protein operates within metabolic intermediate biosynthesis; chorismate biosynthesis; chorismate from D-erythrose 4-phosphate and phosphoenolpyruvate: step 7/7. Its function is as follows. Catalyzes the anti-1,4-elimination of the C-3 phosphate and the C-6 proR hydrogen from 5-enolpyruvylshikimate-3-phosphate (EPSP) to yield chorismate, which is the branch point compound that serves as the starting substrate for the three terminal pathways of aromatic amino acid biosynthesis. This reaction introduces a second double bond into the aromatic ring system. This Pseudoalteromonas translucida (strain TAC 125) protein is Chorismate synthase.